Here is a 418-residue protein sequence, read N- to C-terminus: Histidine--tRNA ligase (418 aa).

The protein belongs to the class-II aminoacyl-tRNA synthetase family. Homodimer.

It localises to the cytoplasm. It carries out the reaction tRNA(His) + L-histidine + ATP = L-histidyl-tRNA(His) + AMP + diphosphate + H(+). This chain is Histidine--tRNA ligase, found in Thermoanaerobacter pseudethanolicus (strain ATCC 33223 / 39E) (Clostridium thermohydrosulfuricum).